Reading from the N-terminus, the 339-residue chain is Peroxidase 29 (339 aa).

The first 28 residues, 1-28 (MKPKSKVAESTAASCFLVMSLLCSCIIG), serve as a signal peptide directing secretion. Cystine bridges form between Cys-47–Cys-127, Cys-80–Cys-85, Cys-133–Cys-335, and Cys-213–Cys-242. Catalysis depends on His-78, which acts as the Proton acceptor. Ca(2+) is bound by residues Asp-79, Val-82, Gly-84, Asp-86, and Ser-88. Pro-176 is a binding site for substrate. Position 206 (His-206) interacts with heme b. Thr-207 provides a ligand contact to Ca(2+). Residue Asn-224 is glycosylated (N-linked (GlcNAc...) asparagine). Residues Asp-260, Thr-262, and Asp-267 each contribute to the Ca(2+) site.

This sequence belongs to the peroxidase family. Classical plant (class III) peroxidase subfamily. Heme b is required as a cofactor. Ca(2+) serves as cofactor.

It localises to the secreted. It carries out the reaction 2 a phenolic donor + H2O2 = 2 a phenolic radical donor + 2 H2O. Functionally, removal of H(2)O(2), oxidation of toxic reductants, biosynthesis and degradation of lignin, suberization, auxin catabolism, response to environmental stresses such as wounding, pathogen attack and oxidative stress. These functions might be dependent on each isozyme/isoform in each plant tissue. The protein is Peroxidase 29 (PER29) of Arabidopsis thaliana (Mouse-ear cress).